The following is a 363-amino-acid chain: Ribonuclease P protein subunit p40 (363 aa).

Component of nuclear RNase P and RNase MRP ribonucleoproteins. RNase P consists of a catalytic RNA moiety and about 10 protein subunits; POP1, POP4, POP5, POP7, RPP14, RPP21, RPP25, RPP30, RPP38 and RPP40. Within the RNase P complex, POP1, POP7 and RPP25 form the 'finger' subcomplex, POP5, RPP14, RPP40 and homodimeric RPP30 form the 'palm' subcomplex, and RPP21, POP4 and RPP38 form the 'wrist' subcomplex. All subunits of the RNase P complex interact with the catalytic RNA. Several subunits of RNase P are also part of the RNase MRP complex. RNase MRP consists of a catalytic RNA moiety and about 8 protein subunits; POP1, POP7, RPP25, RPP30, RPP38, RPP40 and possibly also POP4 and POP5.

The protein resides in the nucleus. Its subcellular location is the nucleolus. Functionally, component of ribonuclease P, a ribonucleoprotein complex that generates mature tRNA molecules by cleaving their 5'-ends. Also a component of the MRP ribonuclease complex, which cleaves pre-rRNA sequences. The protein is Ribonuclease P protein subunit p40 (Rpp40) of Rattus norvegicus (Rat).